The following is a 715-amino-acid chain: MFSLSSTVQPQVTVPLSHLINAFHSPKNISVSVNTSASPKQHRDTVAEHEAPSSEPVLNLRDLGLSELKIGQIDKLVENLLPGFYKDKRVSSCWHTSHISAQSFFENKYGHLDMFSTLRSSSLYRQHPKTLQSICSDLQNFPVFIQSRGFKTLKSRTRRLQSTSERLAEAQNIAPSFVKGFLLRDRGTDLESLDKLMKTKNIPEAHQDAFKTGFAEGFLKAQALTQKTNDSLRRTRLILFVLLLFGIYGLLKNPFLSVRFRTTTGLDSAVDPVQMKNVTFEHVKGVEEAKQELQEVVEFLKNPQKFTVLGGKLPKGILLVGPPGTGKTLLARAVAGEADVPFYYASGSEFDEMFVGVGASRIRNLFREAKANAPCVIFIDELDSVGGKRIEFPMHPYSRQTIIQLLAEMDGFKPNEGVIIIGATNFPEALDNALIRPGRFDMQVTVPRPDVKGRTEILKWYLNKIKFDKSVDPEIIARGTVGFSGAELENLVNQAALKAAVDGKEMVTMKELEFSKDKILMGPERRSVEIDNKNKTITAYHESGHAIIAYYTKDAMPINKATIMPRGPTLGHVSLLPENDRWNEIRAQLLAQMDVSMGGRVAEELIFGTDHITTGASSDFDNATKIAKRMVTKFGMSEKLGVMTYSDTGKLSPETQSAIEQEIRILLRESYERAKHILKTHAKEHKNLAEALLTYETLDAKEIQIVLEGKKLEVR.

The segment at 31 to 54 (VSVNTSASPKQHRDTVAEHEAPSS) is disordered. Residues 41 to 52 (QHRDTVAEHEAP) are compositionally biased toward basic and acidic residues. The chain crosses the membrane as a helical span at residues 238–258 (ILFVLLLFGIYGLLKNPFLSV). 6 residues coordinate ATP: valine 283, threonine 325, glycine 326, lysine 327, threonine 328, and leucine 329. Residue histidine 541 coordinates Zn(2+). Glutamate 542 is an active-site residue. Zn(2+) is bound by residues histidine 545 and aspartate 619.

In the N-terminal section; belongs to the AAA ATPase family. It in the C-terminal section; belongs to the peptidase M41 family. As to quaternary structure, homohexamer; may also form heterohexamers. Exists in several complexes of 600-1100 kDa. Interacts with AFG1L. It depends on Zn(2+) as a cofactor. Post-translationally, proteolytically processed by mitochondrial processing peptidase (MPP) to generate the mature form. Degraded in an OMA1-dependent manner in response to oxidative stress.

The protein localises to the mitochondrion inner membrane. The protein resides in the mitochondrion. The catalysed reaction is ATP + H2O = ADP + phosphate + H(+). ATP-dependent metalloprotease that catalyzes the degradation of folded and unfolded proteins with a suitable degron sequence in the mitochondrial intermembrane region. Plays an important role in regulating mitochondrial morphology and function by cleaving OPA1 at position S2, giving rise to a form of OPA1 that promotes maintenance of normal mitochondrial structure and mitochondrial protein metabolism. Ensures cell proliferation, maintains normal cristae morphology and complex I respiration activity, promotes antiapoptotic activity and protects mitochondria from the accumulation of oxidatively damaged membrane proteins. Required to control the accumulation of nonassembled respiratory chain subunits (NDUFB6, OX4 and ND1). Involved in the mitochondrial adaptation in response to various signals, such as stress or developmental cues, by mediating degradation of mitochondrial proteins to rewire the mitochondrial proteome. Catalyzes degradation of mitochondrial proteins, such as translocases, lipid transfer proteins and metabolic enzymes in response to nutrient starvation in order to limit mitochondrial biogenesis: mechanistically, YME1L is activated by decreased phosphatidylethanolamine levels caused by LPIN1 activity in response to mTORC1 inhibition. Acts as a regulator of adult neural stem cell self-renewal by promoting mitochondrial proteome rewiring, preserving neural stem and progenitor cells self-renewal. Required for normal, constitutive degradation of PRELID1. Catalyzes the degradation of OMA1 in response to membrane depolarization. Mediates degradation of TIMM17A downstream of the integrated stress response (ISR). Catalyzes degradation of MICU1 when MICU1 is not assembled via an interchain disulfide. The chain is ATP-dependent zinc metalloprotease YME1L1 (Yme1l1) from Rattus norvegicus (Rat).